Consider the following 528-residue polypeptide: Acid-sensing ion channel 1 (528 aa).

At 1 to 49 the chain is on the cytoplasmic side; the sequence is MELKAEEEEVGGVQPVSIQAFASSSTLHGLAHIFSYERLSLKRALWALC. Residues 50–66 form a helical membrane-spanning segment; that stretch reads FLGSLAVLLCVCTERVQ. At 67–427 the chain is on the extracellular side; that stretch reads YYFHYHHVTK…ETIEQKKAYE (361 aa). 7 disulfide bridges follow: C93-C194, C172-C179, C290-C367, C310-C363, C314-C361, C323-C345, and C325-C337. 2 N-linked (GlcNAc...) asparagine glycosylation sites follow: N368 and N395. A discontinuously helical membrane pass occupies residues 428–458; it reads IAGLLGDIGGQMGLFIGASILTVLELFDYAY. The GAS motif; ion selectivity filter signature appears at 444 to 446; the sequence is GAS. Over 459–528 the chain is Cytoplasmic; it reads EVIKHKLCRR…ARGTFEDFTC (70 aa). A Phosphoserine; by PKA modification is found at S479. At S499 the chain carries Phosphoserine.

It belongs to the amiloride-sensitive sodium channel (TC 1.A.6) family. ASIC1 subfamily. Forms functional homotrimeric channels. Forms heterotrimers with other ASIC proteins, resulting in channels with distinct properties. Interacts with PICK1; regulates ASIC1 clustering in membranes. Interacts with STOM; alters heterotrimeric channels activity. PH-gating could be regulated by serine proteases. In terms of processing, phosphorylation by PKA regulates interaction with PICK1 and subcellular localization. Phosphorylation by PKC may regulate the channel. Expressed in neurons throughout the central and peripheral nervous system.

It is found in the cell membrane. The protein resides in the postsynaptic cell membrane. Its subcellular location is the cell projection. It localises to the dendrite. The catalysed reaction is Na(+)(in) = Na(+)(out). It carries out the reaction K(+)(in) = K(+)(out). The enzyme catalyses Li(+)(in) = Li(+)(out). It catalyses the reaction Ca(2+)(in) = Ca(2+)(out). With respect to regulation, potentiated by FMRFamide-related neuropeptides, which are induced during inflammation and modulate pain responses. Inhibited by the diuretic drug amiloride. Spider venom psalmotoxin-1 inhibits the channel by locking it in its desensitized conformation. The homotrimeric channel is inhibited by the spider venom pi-theraphotoxin-Hm3a. Homotrimeric and heterotrimeric (with ASIC2 isoform 1) channels are inhibited by the snake venom mambalgin-1, which prevents proton-induced transitions from the resting closed state to the active and/or desensitized states. Inhibited by Texas coral snake toxin MitTx1. In terms of biological role, forms voltage-independent, pH-gated trimeric sodium channels that act as postsynaptic excitatory receptors in the nervous system, playing a crucial role in regulating synaptic plasticity, learning, and memory. Upon extracellular pH drop this channel elicits transient, fast activating, and completely desensitizing inward currents. Displays high selectivity for sodium ions but can also permit the permeation of other cations. Regulates more or less directly intracellular calcium concentration and CaMKII phosphorylation, and thereby the density of dendritic spines. Modulates neuronal activity in the circuits underlying innate fear. Has high selectivity for sodium ions, but can also be permeable to other cations including calcium, lithium and potassium. Its function is as follows. Produces acid activated currents with a reduced amplitude and inactivates faster. Has high selectivity for sodium ions but also supports a calcium-mediated current which is sustained and maintained as long as acidic conditions are present. Also potentially permeable to lithium and potassium. Functionally, has no measurable proton-gated sodium channel activity in vitro. The chain is Acid-sensing ion channel 1 from Homo sapiens (Human).